We begin with the raw amino-acid sequence, 338 residues long: Ribosomal RNA small subunit methyltransferase C (338 aa).

This sequence belongs to the methyltransferase superfamily. RsmC family. Monomer.

The protein resides in the cytoplasm. It catalyses the reaction guanosine(1207) in 16S rRNA + S-adenosyl-L-methionine = N(2)-methylguanosine(1207) in 16S rRNA + S-adenosyl-L-homocysteine + H(+). Specifically methylates the guanine in position 1207 of 16S rRNA in the 30S particle. In Photorhabdus laumondii subsp. laumondii (strain DSM 15139 / CIP 105565 / TT01) (Photorhabdus luminescens subsp. laumondii), this protein is Ribosomal RNA small subunit methyltransferase C.